A 71-amino-acid polypeptide reads, in one-letter code: Small ribosomal subunit protein bS21 (71 aa).

The protein belongs to the bacterial ribosomal protein bS21 family.

This chain is Small ribosomal subunit protein bS21, found in Buchnera aphidicola subsp. Cinara cedri (strain Cc).